A 1156-amino-acid polypeptide reads, in one-letter code: ATP-dependent RNA helicase glh-4 (1156 aa).

Disordered stretches follow at residues 1–81, 194–213, 231–423, and 436–522; these read MSFS…GAPS, TGVG…GQQP, SSSG…DSST, and HRAS…SGLG. The span at 12–22 shows a compositional bias: basic and acidic residues; it reads AEVKVAEDVPE. Residues 24-34 are compositionally biased toward pro residues; sequence NVPPPVEPPRA. 3 stretches are compositionally biased toward polar residues: residues 60–73, 194–211, and 243–258; these read ITTS…TTPK, TGVG…SFGQ, and TESS…TSQP. The segment covering 259 to 281 has biased composition (gly residues); that stretch reads GFGGDSSTGFGSGLKAGFGGHGA. The span at 307 to 319 shows a compositional bias: polar residues; sequence ASSSNESAFGQQS. Composition is skewed to gly residues over residues 321-332 and 342-358; these read GFGGATKNGFGG and SKAG…GGQK. Composition is skewed to polar residues over residues 362–371 and 395–406; these read TESSGFPTKE and PSTTDSSSGQQT. Residues 408–423 show a composition bias toward gly residues; it reads GFGGASKPGFGGDSST. Composition is skewed to polar residues over residues 440–451 and 464–476; these read TAENSGLPTETT and ASSS…GQQS. Residues 478–489 show a composition bias toward gly residues; sequence GFGGATKNGFGG. 5 CCHC-type zinc fingers span residues 570–587, 593–610, 616–633, 639–656, and 665–682; these read RGCH…ECDK, FPCR…DCDQ, GPCR…DCDQ, GPCR…DCQN, and EPCR…ECPT. Residues 736–764 carry the Q motif motif; sequence SFDGFKILPQDLHDNLKRMKMNRPTPIQR. The Helicase ATP-binding domain occupies 767 to 951; it reads FFPIMHGNDV…LPKFVKEGYT (185 aa). 780 to 787 contributes to the ATP binding site; that stretch reads AHTGSGKT. The short motif at 897–900 is the DEAD box element; the sequence is DEAD. One can recognise a Helicase C-terminal domain in the interval 986-1139; sequence GIDENTVTLL…EVPEWLTEGA (154 aa). Residues 1135–1156 form a disordered region; it reads LTEGAGHQEEGGDDWNEQEQEW. A compositionally biased stretch (acidic residues) spans 1145–1156; that stretch reads GGDDWNEQEQEW.

This sequence belongs to the DEAD box helicase family. DDX4/VASA subfamily. As to quaternary structure, interacts (via C-terminus) with kgb-1.

It catalyses the reaction ATP + H2O = ADP + phosphate + H(+). In terms of biological role, probable ATP-binding RNA helicase. May act redundantly with the P-granule component glh-1 to regulate the formation of the granular structure of P-granules in embryos. May protect somatic cells from excessive apoptosis during normal development. The chain is ATP-dependent RNA helicase glh-4 from Caenorhabditis elegans.